Consider the following 509-residue polypeptide: Protein Jade-1 (509 aa).

Residues 1–45 (MKRGRLPSSSEDSDDNGSLSTTWSQNSRSQHRRSSCSRPEDRKPS) are disordered. Residues 60–80 (DSYQLNPDEYYVLADPWRQEW) are interaction with KAT7/HBO1 and histones. Residues 80 to 188 (WEKGVQVPVS…EQRCYDNMNH (109 aa)) form an interaction with histones region. A Phosphoserine modification is found at Ser89. At Thr92 the chain carries Phosphothreonine. Lys114 participates in a covalent cross-link: Glycyl lysine isopeptide (Lys-Gly) (interchain with G-Cter in SUMO2). A PHD-type 1 zinc finger spans residues 203 to 253 (YVVCDVCQSPDGEDGNEMVFCDKCNICVHQACYGILKVPEGSWLCRTCALG). The segment at 255 to 289 (QPKCLLCPKKGGAMKPTRSGTKWVHVSCALWIPEV) adopts a C2HC pre-PHD-type zinc-finger fold. The PHD-type 2 zinc finger occupies 313 to 369 (LVCSLCNEKFGASIQCSVKNCRTAFHVTCAFDRGLEMKTILAENDEVKFKSYCPKHS). Residues 373–399 (KAEEGLGEGTAQENGAPECSPRDPLEP) form a disordered region.

The protein belongs to the JADE family. As to quaternary structure, component of the HBO1 complex composed at least of ING4 or ING5, KAT7/HBO1, MEAF6, and one of JADE1, JADE2 and JADE3. Interacts with NPHP4.

The protein resides in the nucleus. Its subcellular location is the chromosome. It is found in the cytoplasm. It localises to the cytoskeleton. The protein localises to the cilium basal body. Functionally, scaffold subunit of some HBO1 complexes, which have a histone H4 acetyltransferase activity. Plays a key role in HBO1 complex by directing KAT7/HBO1 specificity towards histone H4 acetylation (H4K5ac, H4K8ac and H4K12ac), regulating DNA replication initiation, regulating DNA replication initiation. May also promote acetylation of nucleosomal histone H4 by KAT5. Promotes apoptosis. May act as a renal tumor suppressor. Negatively regulates canonical Wnt signaling; at least in part, cooperates with NPHP4 in this function. The chain is Protein Jade-1 (JADE1) from Bos taurus (Bovine).